Reading from the N-terminus, the 727-residue chain is Protein TITANIA (727 aa).

A disordered region spans residues 1–136; the sequence is MFGDSDGSKD…LASLLQPVPA (136 aa). Pro residues predominate over residues 14-25; the sequence is GAPPSTTDPPFP. Basic and acidic residues predominate over residues 67 to 88; that stretch reads DDGKHCVERDFLHLSAPKRGDP. Residues 104 to 117 are compositionally biased toward low complexity; the sequence is DSLQLSLSLNSDGP. Residues 406–470 form a PHD-type zinc finger; the sequence is ACTCSVCHKF…QFQCLACNHS (65 aa). Residues 629 to 697 are a coiled coil; it reads VKCKEAEAKL…LEELKMLENS (69 aa).

Widely expressed.

It localises to the nucleus. Its function is as follows. Probable transcription factor that functions as a regulator of metal transporter genes responsible for essential metals delivery to shoots and normal plant growth. Required for the maintenance of metal transporter gene expression, such as IRT1, IRT2, ZIP1, ZIP9, NRAMP1 and NRAMP5. This Oryza sativa subsp. japonica (Rice) protein is Protein TITANIA.